A 427-amino-acid chain; its full sequence is Acyl-lipid 8-desaturase (427 aa).

The tract at residues 1 to 24 (MGRGGDSSGQAHPAAELAVPSDRA) is disordered. The region spanning 36–84 (IVLYGKRVDVTKFQRTHPGGSKVFRIFQDRDATEQFESYHSKRAIKMME) is the Cytochrome b5 heme-binding domain. Positions 52 and 75 each coordinate heme. A Histidine box-1 motif is present at residues 178–182 (HSVFK). A helical membrane pass occupies residues 189–209 (VGWNNAAGYFLGFVQGYAVEW). The short motif at 213-218 (RHNTHH) is the Histidine box-2 element. Helical transmembrane passes span 261 to 281 (VPVM…YVAM) and 286 to 306 (MLPQ…VFAG). Positions 373–377 (QTEHH) match the Histidine box-3 motif.

It belongs to the fatty acid desaturase type 1 family. Fe(2+) is required as a cofactor.

It localises to the membrane. Its function is as follows. Fatty acid desaturase that introduces a cis double bond at the 8-position in 20-carbon polyunsaturated fatty acids incorporated in a glycerolipid that contain a Delta(8) double bond to yield (20:4(8,11,14,17)). This chain is Acyl-lipid 8-desaturase, found in Rebecca salina (Marine microalga).